Here is a 697-residue protein sequence, read N- to C-terminus: Protein Niban 3 (697 aa).

A disordered region spans residues 1–48 (MGPDRKEVPLSRGTQAVVVGKGRGAPGDDSSMGGRPSSPLDKQQRQHL).

The protein belongs to the Niban family. As to expression, specifically expressed in B-lymphocytes.

This chain is Protein Niban 3, found in Homo sapiens (Human).